The following is a 284-amino-acid chain: D-tagatose-1,6-bisphosphate aldolase subunit GatY (284 aa).

Catalysis depends on D82, which acts as the Proton donor. Zn(2+)-binding residues include H83 and H180. G181 is a binding site for dihydroxyacetone phosphate. H208 contributes to the Zn(2+) binding site. Dihydroxyacetone phosphate is bound by residues 209 to 211 (GAS) and 230 to 233 (NVAT).

Belongs to the class II fructose-bisphosphate aldolase family. TagBP aldolase GatY subfamily. In terms of assembly, forms a complex with GatZ. Zn(2+) serves as cofactor.

It carries out the reaction D-tagatofuranose 1,6-bisphosphate = D-glyceraldehyde 3-phosphate + dihydroxyacetone phosphate. Its pathway is carbohydrate metabolism; D-tagatose 6-phosphate degradation; D-glyceraldehyde 3-phosphate and glycerone phosphate from D-tagatose 6-phosphate: step 2/2. Catalytic subunit of the tagatose-1,6-bisphosphate aldolase GatYZ, which catalyzes the reversible aldol condensation of dihydroxyacetone phosphate (DHAP or glycerone-phosphate) with glyceraldehyde 3-phosphate (G3P) to produce tagatose 1,6-bisphosphate (TBP). Requires GatZ subunit for full activity and stability. Is involved in the catabolism of galactitol. The polypeptide is D-tagatose-1,6-bisphosphate aldolase subunit GatY (Escherichia coli (strain 55989 / EAEC)).